A 128-amino-acid chain; its full sequence is Head peptide (128 aa).

The signal sequence occupies residues 1 to 22 (MWKFASIVVLVVCLAWAVYCED). Position 23 is a pyrrolidone carboxylic acid (Q23). Hydroxyproline; partial is present on P26. The tract at residues 27–128 (SLKTRFGRSA…GRANKKRAAN (102 aa)) is disordered. F32 carries the phenylalanine amide modification. The propeptide occupies 35–55 (SADEPESDNYVSNDIMEKRSA). At Q56 the chain carries Pyrrolidone carboxylic acid. P59 bears the Hydroxyproline; partial mark. F65 is modified (phenylalanine amide). The span at 66-78 (GRSEGAEVMEKRS) shows a compositional bias: basic and acidic residues. Residues 68–79 (SEGAEVMEKRSA) constitute a propeptide that is removed on maturation. Q80 is subject to Pyrrolidone carboxylic acid. P83 carries the post-translational modification Hydroxyproline; partial. The residue at position 89 (F89) is a Phenylalanine amide. The propeptide occupies 92–128 (SVANPESDGYMRKRSAESEPFVTRIRHGRANKKRAAN). Over residues 115–128 (RIRHGRANKKRAAN) the composition is skewed to basic residues.

This sequence belongs to the NPY family. As to expression, expressed in the brain, terminal ganglion, and midgut of adults: numerous neurosecretory cells and midgut endocrine cells. Expression is dynamic depending on reproductive cycle.

Its subcellular location is the secreted. Functionally, has a role in inhibiting host-seeking behavior during a reproductive cycle. This is Head peptide from Aedes aegypti (Yellowfever mosquito).